The primary structure comprises 309 residues: L-lactate dehydrogenase (309 aa).

Residues Val12, Asp33, Arg38, Tyr63, and 77 to 78 (GA) each bind NAD(+). Residues Gln80, Arg86, and 118 to 121 (NPVD) each bind substrate. NAD(+) is bound by residues 116-118 (ATN) and Ser141. Substrate is bound at residue 146–149 (DSAR). Residues Arg151 and His166 each contribute to the beta-D-fructose 1,6-bisphosphate site. Catalysis depends on His173, which acts as the Proton acceptor. Tyr219 carries the phosphotyrosine modification. Residue Thr228 coordinates substrate.

Belongs to the LDH/MDH superfamily. LDH family. Homotetramer.

Its subcellular location is the cytoplasm. It catalyses the reaction (S)-lactate + NAD(+) = pyruvate + NADH + H(+). It functions in the pathway fermentation; pyruvate fermentation to lactate; (S)-lactate from pyruvate: step 1/1. Allosterically activated by fructose 1,6-bisphosphate (FBP). Catalyzes the conversion of lactate to pyruvate. This is L-lactate dehydrogenase from Nitratidesulfovibrio vulgaris (strain ATCC 29579 / DSM 644 / CCUG 34227 / NCIMB 8303 / VKM B-1760 / Hildenborough) (Desulfovibrio vulgaris).